The sequence spans 675 residues: DNA ligase 1 (675 aa).

NAD(+)-binding positions include 34 to 38, 83 to 84, and Glu-114; these read DFEYD and SL. Lys-116 serves as the catalytic N6-AMP-lysine intermediate. Residues Arg-137, Glu-177, Lys-295, and Lys-319 each contribute to the NAD(+) site. Residues Cys-413, Cys-416, Cys-431, and Cys-436 each contribute to the Zn(2+) site. Residues 596-675 enclose the BRCT domain; sequence NSGSALAGKT…AEFLRLLSGG (80 aa).

The protein belongs to the NAD-dependent DNA ligase family. LigA subfamily. Requires Mg(2+) as cofactor. It depends on Mn(2+) as a cofactor.

It catalyses the reaction NAD(+) + (deoxyribonucleotide)n-3'-hydroxyl + 5'-phospho-(deoxyribonucleotide)m = (deoxyribonucleotide)n+m + AMP + beta-nicotinamide D-nucleotide.. In terms of biological role, DNA ligase that catalyzes the formation of phosphodiester linkages between 5'-phosphoryl and 3'-hydroxyl groups in double-stranded DNA using NAD as a coenzyme and as the energy source for the reaction. It is essential for DNA replication and repair of damaged DNA. In Opitutus terrae (strain DSM 11246 / JCM 15787 / PB90-1), this protein is DNA ligase 1.